The primary structure comprises 407 residues: Cytochrome P450 NovI (407 aa).

Residue C357 participates in heme binding.

Belongs to the cytochrome P450 family. Heme is required as a cofactor.

It functions in the pathway antibiotic biosynthesis; novobiocin biosynthesis. Together with NovH, involved in the formation of a beta-OH-Tyr intermediate in the novobiocin biosynthesis pathway, an aminocoumarin family antibiotic that targets bacterial DNA gyrases. Acts as a cytochrome P450-type monooxygenase with specificity for the tyrosyl-S-NovH acyl enzyme (L-Tyr-S-NovH) to form the beta-OH-Tyr intermediate (L-beta-OH-Tyr-S-NovH). In Streptomyces niveus (Streptomyces spheroides), this protein is Cytochrome P450 NovI (novI).